Consider the following 388-residue polypeptide: Protein TsgA homolog (388 aa).

The next 12 helical transmembrane spans lie at 12-32, 51-71, 77-97, 102-122, 137-157, 163-183, 203-223, 246-266, 272-292, 294-314, 331-351, and 356-376; these read CISFLSYALTGALITITGIFL, TFLNAGILSSIFISSWITNII, LIFGFILTIIATLILIFSHNL, ISMFMLGIISGITMSIGTYII, LTDSFFSMSGIIFPIITALII, WYWVYFIIGIIYLIIFLITIN, FSILCLSISALLYILGQLSFI, SAFWMAYMVGMWIFSFILKFF, IITLSGISLFLMSLFNIFYDY, LLYIIILSLGFFSSAIYTIII, YILTSGTVGTLLTFIITGPIV, and IFSALLVSNILYGIVFFLVII.

It belongs to the major facilitator superfamily. TsgA family.

The protein resides in the cell membrane. The sequence is that of Protein TsgA homolog from Buchnera aphidicola subsp. Baizongia pistaciae (strain Bp).